Here is a 697-residue protein sequence, read N- to C-terminus: Glycine--tRNA ligase beta subunit (697 aa).

The protein belongs to the class-II aminoacyl-tRNA synthetase family. Tetramer of two alpha and two beta subunits.

It localises to the cytoplasm. It carries out the reaction tRNA(Gly) + glycine + ATP = glycyl-tRNA(Gly) + AMP + diphosphate. This chain is Glycine--tRNA ligase beta subunit, found in Cereibacter sphaeroides (strain ATCC 17029 / ATH 2.4.9) (Rhodobacter sphaeroides).